Reading from the N-terminus, the 357-residue chain is Chorismate synthase (357 aa).

Arg-47 contributes to the NADP(+) binding site. FMN is bound by residues 123–125 (RAS), Gly-281, 296–300 (KPTSS), and Arg-324.

The protein belongs to the chorismate synthase family. In terms of assembly, homotetramer. Requires FMNH2 as cofactor.

It catalyses the reaction 5-O-(1-carboxyvinyl)-3-phosphoshikimate = chorismate + phosphate. It functions in the pathway metabolic intermediate biosynthesis; chorismate biosynthesis; chorismate from D-erythrose 4-phosphate and phosphoenolpyruvate: step 7/7. Functionally, catalyzes the anti-1,4-elimination of the C-3 phosphate and the C-6 proR hydrogen from 5-enolpyruvylshikimate-3-phosphate (EPSP) to yield chorismate, which is the branch point compound that serves as the starting substrate for the three terminal pathways of aromatic amino acid biosynthesis. This reaction introduces a second double bond into the aromatic ring system. This chain is Chorismate synthase, found in Chlamydia trachomatis serovar A (strain ATCC VR-571B / DSM 19440 / HAR-13).